A 356-amino-acid chain; its full sequence is DNA polymerase IV (356 aa).

Residues 6-187 (IIHIDMDYFF…LDIGDFPGVG (182 aa)) enclose the UmuC domain. Mg(2+) is bound by residues D10 and D105. Residue E106 is part of the active site.

Belongs to the DNA polymerase type-Y family. Monomer. Mg(2+) serves as cofactor.

It localises to the cytoplasm. The catalysed reaction is DNA(n) + a 2'-deoxyribonucleoside 5'-triphosphate = DNA(n+1) + diphosphate. Functionally, poorly processive, error-prone DNA polymerase involved in untargeted mutagenesis. Copies undamaged DNA at stalled replication forks, which arise in vivo from mismatched or misaligned primer ends. These misaligned primers can be extended by PolIV. Exhibits no 3'-5' exonuclease (proofreading) activity. May be involved in translesional synthesis, in conjunction with the beta clamp from PolIII. The polypeptide is DNA polymerase IV (Staphylococcus epidermidis (strain ATCC 35984 / DSM 28319 / BCRC 17069 / CCUG 31568 / BM 3577 / RP62A)).